The chain runs to 150 residues: Single-stranded DNA-binding protein 1 (150 aa).

An SSB domain is found at 1–104 (MINNVVLVGR…VVADTFQMLE (104 aa)). The span at 103-120 (LESNKTQGQQTSKPQAQN) shows a compositional bias: polar residues. The interval 103-150 (LESNKTQGQQTSKPQAQNKKPQAPDPFKAPAADPFAGGTEISDDDLPF) is disordered. Over residues 121–138 (KKPQAPDPFKAPAADPFA) the composition is skewed to low complexity. Residues 145-150 (DDDLPF) carry the Important for interaction with partner proteins motif.

In terms of assembly, homotetramer.

Functionally, plays an important role in DNA replication, recombination and repair. Binds to ssDNA and to an array of partner proteins to recruit them to their sites of action during DNA metabolism. The polypeptide is Single-stranded DNA-binding protein 1 (ssb1) (Lactococcus lactis subsp. lactis (strain IL1403) (Streptococcus lactis)).